We begin with the raw amino-acid sequence, 251 residues long: MVEDSQETTHFGFQTVAKEQKADMVAHVFHSVASKYDVMNDLMSFGIHRLWKRFTIDCSGVRRGQTVLDLAGGTGDLTAKFSRMVGETGKVILADINDSMLKMGREKLRNIGVIGNVEYVQANAEALPFPDNTFDCITISFGLRNVTEKEKALRSMFRVLKPGGRLLVLEFSKPIIEPLSKAYDAYSFHILPRIGLMVANDADSYRYLAESIRMHPDQDTLKVMMQDAGFESVDYYNLTAGVVALHRGYKF.

S-adenosyl-L-methionine-binding positions include Thr74, Asp95, 123 to 124, and Ser140; that span reads NA.

Belongs to the class I-like SAM-binding methyltransferase superfamily. MenG/UbiE family.

The enzyme catalyses a 2-demethylmenaquinol + S-adenosyl-L-methionine = a menaquinol + S-adenosyl-L-homocysteine + H(+). It catalyses the reaction a 2-methoxy-6-(all-trans-polyprenyl)benzene-1,4-diol + S-adenosyl-L-methionine = a 5-methoxy-2-methyl-3-(all-trans-polyprenyl)benzene-1,4-diol + S-adenosyl-L-homocysteine + H(+). It functions in the pathway quinol/quinone metabolism; menaquinone biosynthesis; menaquinol from 1,4-dihydroxy-2-naphthoate: step 2/2. Its pathway is cofactor biosynthesis; ubiquinone biosynthesis. Functionally, methyltransferase required for the conversion of demethylmenaquinol (DMKH2) to menaquinol (MKH2) and the conversion of 2-polyprenyl-6-methoxy-1,4-benzoquinol (DDMQH2) to 2-polyprenyl-3-methyl-6-methoxy-1,4-benzoquinol (DMQH2). The polypeptide is Ubiquinone/menaquinone biosynthesis C-methyltransferase UbiE (Salmonella arizonae (strain ATCC BAA-731 / CDC346-86 / RSK2980)).